Here is a 529-residue protein sequence, read N- to C-terminus: Peptide chain release factor 3 (529 aa).

The tr-type G domain occupies 11 to 280; sequence SKRRTFAIIS…SLIKWAPSPI (270 aa). GTP-binding positions include 20–27, 88–92, and 142–145; these read SHPDAGKT, DTPGH, and NKLD.

This sequence belongs to the TRAFAC class translation factor GTPase superfamily. Classic translation factor GTPase family. PrfC subfamily.

Its subcellular location is the cytoplasm. Functionally, increases the formation of ribosomal termination complexes and stimulates activities of RF-1 and RF-2. It binds guanine nucleotides and has strong preference for UGA stop codons. It may interact directly with the ribosome. The stimulation of RF-1 and RF-2 is significantly reduced by GTP and GDP, but not by GMP. This chain is Peptide chain release factor 3, found in Buchnera aphidicola subsp. Schizaphis graminum (strain Sg).